Here is a 338-residue protein sequence, read N- to C-terminus: Ornithine carbamoyltransferase (338 aa).

Residues R116 and 143–146 contribute to the carbamoyl phosphate site; that span reads HPCQ. Residues N174, D235, and 239-240 each bind L-ornithine; that span reads SM. The carbamoyl phosphate site is built by C275 and R303.

Belongs to the aspartate/ornithine carbamoyltransferase superfamily. OTCase family.

The protein localises to the cytoplasm. The catalysed reaction is carbamoyl phosphate + L-ornithine = L-citrulline + phosphate + H(+). Its pathway is amino-acid biosynthesis; L-arginine biosynthesis; L-arginine from L-ornithine and carbamoyl phosphate: step 1/3. Its function is as follows. Reversibly catalyzes the transfer of the carbamoyl group from carbamoyl phosphate (CP) to the N(epsilon) atom of ornithine (ORN) to produce L-citrulline. The protein is Ornithine carbamoyltransferase of Chlorobaculum tepidum (strain ATCC 49652 / DSM 12025 / NBRC 103806 / TLS) (Chlorobium tepidum).